Consider the following 67-residue polypeptide: Retron Se72 cold shock-like protein (67 aa).

The CSD domain maps to 1 to 66 (MENGFVNFYD…KGFKAVAIQK (66 aa)).

Functionally, probable cold shock-like component of antiviral defense system retron Se72, composed of a non-coding RNA (ncRNA), a reverse transcriptase (RT) and this protein. Expression of retron Se72 confers protection against bacteriophage lambda. At multiplicity of infection (MOI) of 0.02 cultures slow growth when infected with lambda but do not collapse, at MOI 2 cultures enter growth stasis. This Salmonella heidelberg (strain 579083-10) protein is Retron Se72 cold shock-like protein.